A 240-amino-acid chain; its full sequence is Aliphatic sulfonates import ATP-binding protein SsuB (240 aa).

The ABC transporter domain maps to 6-227 (IQLSKLRKNF…VKDRHFACFE (222 aa)). 38–45 (GESGCGKS) provides a ligand contact to ATP.

It belongs to the ABC transporter superfamily. Aliphatic sulfonates importer (TC 3.A.1.17.2) family. As to quaternary structure, the complex is composed of two ATP-binding proteins (SsuB), two transmembrane proteins (SsuC) and a solute-binding protein (SsuA).

The protein localises to the cell inner membrane. It carries out the reaction ATP + H2O + aliphatic sulfonate-[sulfonate-binding protein]Side 1 = ADP + phosphate + aliphatic sulfonateSide 2 + [sulfonate-binding protein]Side 1.. Part of the ABC transporter complex SsuABC involved in aliphatic sulfonates import. Responsible for energy coupling to the transport system. In Zymomonas mobilis subsp. mobilis (strain ATCC 31821 / ZM4 / CP4), this protein is Aliphatic sulfonates import ATP-binding protein SsuB.